The chain runs to 330 residues: Ribosomal RNA small subunit methyltransferase A (330 aa).

H29, L31, G56, E77, and D98 together coordinate S-adenosyl-L-methionine. Positions 115 to 158 (PVRSAGLPQAETAPKGLEPAGSSSQQGPRDWLRQTAGAAAPSRG) are disordered. Residue N177 coordinates S-adenosyl-L-methionine.

The protein belongs to the class I-like SAM-binding methyltransferase superfamily. rRNA adenine N(6)-methyltransferase family. RsmA subfamily.

It is found in the cytoplasm. The catalysed reaction is adenosine(1518)/adenosine(1519) in 16S rRNA + 4 S-adenosyl-L-methionine = N(6)-dimethyladenosine(1518)/N(6)-dimethyladenosine(1519) in 16S rRNA + 4 S-adenosyl-L-homocysteine + 4 H(+). In terms of biological role, specifically dimethylates two adjacent adenosines (A1518 and A1519) in the loop of a conserved hairpin near the 3'-end of 16S rRNA in the 30S particle. May play a critical role in biogenesis of 30S subunits. This Polaromonas sp. (strain JS666 / ATCC BAA-500) protein is Ribosomal RNA small subunit methyltransferase A.